A 526-amino-acid polypeptide reads, in one-letter code: Secreted triacylglycerol lipase LIP4 (526 aa).

A signal peptide spans 1–26; that stretch reads MVRLSYVRFGVAWCIAIIIVSGFSNA. A glycan (N-linked (GlcNAc...) asparagine) is linked at N186. The active-site Nucleophile is S195. N-linked (GlcNAc...) asparagine glycosylation occurs at N228. Catalysis depends on residues D342 and H376. N377 is a glycosylation site (N-linked (GlcNAc...) asparagine). A disordered region spans residues 412–526; it reads TGPSASSSAG…TMPAPPLMER (115 aa). Low complexity-rich tracts occupy residues 413–423 and 430–457; these read GPSASSSAGGP and TGGH…HAPA. N462 is a glycosylation site (N-linked (GlcNAc...) asparagine). A compositionally biased stretch (low complexity) spans 480–490; it reads PSTGATSPAPS. The segment covering 516–526 has biased composition (pro residues); it reads RTMPAPPLMER.

The protein belongs to the AB hydrolase superfamily. Lipase family. Class Lip subfamily.

Its subcellular location is the secreted. The catalysed reaction is a triacylglycerol + H2O = a diacylglycerol + a fatty acid + H(+). It carries out the reaction a monoacylglycerol + H2O = glycerol + a fatty acid + H(+). The enzyme catalyses a diacylglycerol + H2O = a monoacylglycerol + a fatty acid + H(+). Secreted lipase that hydrolyzes acylglycerol lipids such as triacylglycerols and consequently releases free fatty acid. Can hydrolyze 4-nitrophenyl palmitate to release 4-nitrophenol and palmitoic acid. Due to an absence of fatty acid synthase genes in Malassezia species, secretory lipases are essential for the yeast to generate free fatty acids from degradation of sebum and assimilate them as lipid sources for growth. Plays important roles not only in lipid metabolism but also in the immune response of host cells and pathogenesis. The protein is Secreted triacylglycerol lipase LIP4 of Malassezia furfur (Pityriasis versicolor infection agent).